A 404-amino-acid polypeptide reads, in one-letter code: Alpha-galactosidase A (404 aa).

The signal sequence occupies residues 1 to 23; the sequence is MRKQLLLGLGLVSALLVSVQASA. Cystine bridges form between cysteine 45-cysteine 77 and cysteine 124-cysteine 154. The active-site Nucleophile is aspartate 152. Substrate is bound at residue 185 to 189; that stretch reads EWGDN. Aspartate 207 (proton donor) is an active-site residue.

Belongs to the glycosyl hydrolase 27 family.

It carries out the reaction Hydrolysis of terminal, non-reducing alpha-D-galactose residues in alpha-D-galactosides, including galactose oligosaccharides, galactomannans and galactolipids.. Hydrolyzes galactomannan found in plant cell wall, by cleaving alpha-1,6-D-galactose side-chains from the mannan backbone. Appears to act in synergy with mannanase (ManA) to elicit hydrolysis of galactomannan. Has greater activity against galactomannans with decreased degree of polymerisation values. To a lesser extent, is also able to degrade other galactosides containing alpha-1,6-linked D-galactose, such as melibiose and stachyose. In Cellvibrio japonicus (strain Ueda107) (Pseudomonas fluorescens subsp. cellulosa), this protein is Alpha-galactosidase A (agaA).